Consider the following 210-residue polypeptide: Small ribosomal subunit protein uS3 (210 aa).

Residues 38–106 (LKSFLKKRLY…EVYLNIQEVR (69 aa)) enclose the KH type-2 domain.

It belongs to the universal ribosomal protein uS3 family. As to quaternary structure, part of the 30S ribosomal subunit. Forms a tight complex with proteins S10 and S14.

In terms of biological role, binds the lower part of the 30S subunit head. Binds mRNA in the 70S ribosome, positioning it for translation. The sequence is that of Small ribosomal subunit protein uS3 from Geotalea daltonii (strain DSM 22248 / JCM 15807 / FRC-32) (Geobacter daltonii).